The primary structure comprises 428 residues: Lysophosphatidic acid phosphatase type 6 (428 aa).

The N-terminal 32 residues, 1 to 32, are a transit peptide targeting the mitochondrion; it reads MITGVFSMRLWTPVGVLTSLAYCLHQRRVALA. A substrate binding region spans residues 58-168; the sequence is RHGARSPRKP…VFIRSTNIFR (111 aa). The active-site Nucleophile is H59. The active-site Proton donor is the D335.

Belongs to the histidine acid phosphatase family. Monomer.

The protein localises to the mitochondrion. It carries out the reaction a phosphate monoester + H2O = an alcohol + phosphate. The catalysed reaction is 1-(9Z-octadecenoyl)-sn-glycero-3-phosphate + H2O = 1-(9Z-octadecenoyl)-sn-glycerol + phosphate. Functionally, hydrolyzes lysophosphatidic acid (LPA) containing a medium length fatty acid chain to the corresponding monoacylglycerol. Has highest activity with lysophosphatidic acid containing myristate (C14:0), monounsaturated oleate (C18:1) or palmitate (C16:0), and lower activity with C18:0 and C6:0 lysophosphatidic acid. In Pongo abelii (Sumatran orangutan), this protein is Lysophosphatidic acid phosphatase type 6 (ACP6).